Here is a 158-residue protein sequence, read N- to C-terminus: SsrA-binding protein (158 aa).

The disordered stretch occupies residues 130 to 158 (KGKKNHDKREAQAKRDWSRQKQRLLKDHG). The segment covering 136–158 (DKREAQAKRDWSRQKQRLLKDHG) has biased composition (basic and acidic residues).

Belongs to the SmpB family.

The protein localises to the cytoplasm. Its function is as follows. Required for rescue of stalled ribosomes mediated by trans-translation. Binds to transfer-messenger RNA (tmRNA), required for stable association of tmRNA with ribosomes. tmRNA and SmpB together mimic tRNA shape, replacing the anticodon stem-loop with SmpB. tmRNA is encoded by the ssrA gene; the 2 termini fold to resemble tRNA(Ala) and it encodes a 'tag peptide', a short internal open reading frame. During trans-translation Ala-aminoacylated tmRNA acts like a tRNA, entering the A-site of stalled ribosomes, displacing the stalled mRNA. The ribosome then switches to translate the ORF on the tmRNA; the nascent peptide is terminated with the 'tag peptide' encoded by the tmRNA and targeted for degradation. The ribosome is freed to recommence translation, which seems to be the essential function of trans-translation. The polypeptide is SsrA-binding protein (Ruegeria sp. (strain TM1040) (Silicibacter sp.)).